A 985-amino-acid polypeptide reads, in one-letter code: Ankyrin repeat domain-containing protein 24 (985 aa).

5 ANK repeats span residues 52-81 (EGKSAFHLAAMRGAAGCLEVMLAQGADVMS), 85-114 (AGYNALHLAAKYGHPECLKQLLEASCVVDI), 118-147 (SGWTALHHAAAGGCLSCSKLLCSFKAHMNP), 151-180 (SGATPLIIAAQMCHTDLCRLLLQQGAATND), and 184-213 (QGRTALMLACEGGSPETVEVLLQGGAQLSI). Disordered regions lie at residues 243–293 (RSSP…DRDA), 311–360 (IRGL…LGRE), 386–412 (QDEEGEMPDFPGADALMPKNQSPSAEE), 476–503 (YTEAMHSQQQQQEGEPPRAQEGEETAYQ), and 594–614 (DNAESEPVAAEDTGGKENPGM). The stretch at 291–488 (RDAYEEIVRL…AMHSQQQQQE (198 aa)) forms a coiled coil. Composition is skewed to basic and acidic residues over residues 311 to 326 (IRGLEQHKERRRKEPL) and 349 to 360 (EKQEEKESLGRE).

Homodimer. Interacts (via C-terminal domain) with TRIOBP (via C-terminal domain) isoform 4; recruits TRIOBP isoform 4 to stereocilia rootlets. Expressed in vestibular hair bundles.

The protein resides in the cell membrane. The protein localises to the cell projection. It localises to the stereocilium. Component of the stereocilia rootlet in hair cells of inner ear. Bridges the apical plasma membrane with the lower rootlet and maintains normal distribution of TRIOBP, thereby reinforcing stereocilia insertion points and organizing rootlets for hearing with long-term resilience. This Mus musculus (Mouse) protein is Ankyrin repeat domain-containing protein 24 (Ankrd24).